Reading from the N-terminus, the 78-residue chain is Large ribosomal subunit protein bL31 (78 aa).

Belongs to the bacterial ribosomal protein bL31 family. Type A subfamily. In terms of assembly, part of the 50S ribosomal subunit.

Its function is as follows. Binds the 23S rRNA. The sequence is that of Large ribosomal subunit protein bL31 from Rickettsia prowazekii (strain Madrid E).